Reading from the N-terminus, the 301-residue chain is Phosphatidylglycerol--prolipoprotein diacylglyceryl transferase (301 aa).

3 helical membrane passes run 17-37 (LAVR…IVVG), 59-79 (MLFY…VLFY), and 97-117 (GGMS…LFAY). An a 1,2-diacyl-sn-glycero-3-phospho-(1'-sn-glycerol)-binding site is contributed by arginine 142. 2 consecutive transmembrane segments (helical) span residues 230–250 (MGAI…TVEF) and 265–285 (LSMG…LLVW).

This sequence belongs to the Lgt family.

It is found in the cell inner membrane. The enzyme catalyses L-cysteinyl-[prolipoprotein] + a 1,2-diacyl-sn-glycero-3-phospho-(1'-sn-glycerol) = an S-1,2-diacyl-sn-glyceryl-L-cysteinyl-[prolipoprotein] + sn-glycerol 1-phosphate + H(+). The protein operates within protein modification; lipoprotein biosynthesis (diacylglyceryl transfer). In terms of biological role, catalyzes the transfer of the diacylglyceryl group from phosphatidylglycerol to the sulfhydryl group of the N-terminal cysteine of a prolipoprotein, the first step in the formation of mature lipoproteins. This is Phosphatidylglycerol--prolipoprotein diacylglyceryl transferase from Paraburkholderia xenovorans (strain LB400).